Consider the following 480-residue polypeptide: Gasdermin-C3 (480 aa).

The interval M1–K226 is triggers pyroptosis.

This sequence belongs to the gasdermin family. In terms of assembly, homooligomer; homooligomeric ring-shaped pore complex containing 27-28 subunits when inserted in the membrane. Cleavage by CASP8 relieves autoinhibition by releasing the N-terminal moiety (Gasdermin-C3, N-terminal) that initiates pyroptosis. In terms of processing, palmitoylated.

Its subcellular location is the cytoplasm. The protein localises to the cytosol. It is found in the cell membrane. The full-length protein before cleavage is inactive: intramolecular interactions between N- and C-terminal domains mediate autoinhibition in the absence of activation signal. The intrinsic pyroptosis-inducing activity is carried by the released N-terminal moiety (Gasdermin-C3, N-terminal) following cleavage by caspase CASP8. This form constitutes the precursor of the pore-forming protein: upon cleavage, the released N-terminal moiety (Gasdermin-C3, N-terminal) binds to membranes and forms pores, triggering pyroptosis. In terms of biological role, pore-forming protein that causes membrane permeabilization and pyroptosis. Produced by the cleavage of gasdermin-C3 by caspase CASP8 in response to death signals. After cleavage, moves to the plasma membrane where it strongly binds to membrane inner leaflet lipids. Homooligomerizes within the membrane and forms pores of 10-15 nanometers (nm) of inner diameter, triggering pyroptosis. The protein is Gasdermin-C3 of Mus musculus (Mouse).